The sequence spans 273 residues: Ribosomal RNA small subunit methyltransferase A (273 aa).

Residues H10, L12, G37, E58, D83, and N108 each contribute to the S-adenosyl-L-methionine site.

It belongs to the class I-like SAM-binding methyltransferase superfamily. rRNA adenine N(6)-methyltransferase family. RsmA subfamily.

It localises to the cytoplasm. It catalyses the reaction adenosine(1518)/adenosine(1519) in 16S rRNA + 4 S-adenosyl-L-methionine = N(6)-dimethyladenosine(1518)/N(6)-dimethyladenosine(1519) in 16S rRNA + 4 S-adenosyl-L-homocysteine + 4 H(+). Its function is as follows. Specifically dimethylates two adjacent adenosines (A1518 and A1519) in the loop of a conserved hairpin near the 3'-end of 16S rRNA in the 30S particle. May play a critical role in biogenesis of 30S subunits. The protein is Ribosomal RNA small subunit methyltransferase A of Picosynechococcus sp. (strain ATCC 27264 / PCC 7002 / PR-6) (Agmenellum quadruplicatum).